The following is a 2299-amino-acid chain: Protein Ycf2 (2299 aa).

1642-1649 (GSIGTGRS) lines the ATP pocket.

The protein belongs to the Ycf2 family.

The protein localises to the plastid. Its subcellular location is the chloroplast stroma. Probable ATPase of unknown function. Its presence in a non-photosynthetic plant (Epifagus virginiana) and experiments in tobacco indicate that it has an essential function which is probably not related to photosynthesis. The sequence is that of Protein Ycf2 from Nandina domestica (Heavenly bamboo).